Here is a 559-residue protein sequence, read N- to C-terminus: Formate--tetrahydrofolate ligase (559 aa).

Residue 68–75 participates in ATP binding; it reads TPAGEGKT.

This sequence belongs to the formate--tetrahydrofolate ligase family.

It catalyses the reaction (6S)-5,6,7,8-tetrahydrofolate + formate + ATP = (6R)-10-formyltetrahydrofolate + ADP + phosphate. It functions in the pathway one-carbon metabolism; tetrahydrofolate interconversion. The chain is Formate--tetrahydrofolate ligase from Rhizobium meliloti (strain 1021) (Ensifer meliloti).